Here is a 196-residue protein sequence, read N- to C-terminus: Putative NADH dehydrogenase/NAD(P)H nitroreductase Smal_0358 (196 aa).

It belongs to the nitroreductase family. HadB/RutE subfamily. Requires FMN as cofactor.

This is Putative NADH dehydrogenase/NAD(P)H nitroreductase Smal_0358 from Stenotrophomonas maltophilia (strain R551-3).